Here is a 118-residue protein sequence, read N- to C-terminus: MRTKIELGKLGENLAADFLERRGFRIVDTNWRCPSGEIDLVAFDGEFLVIAEVKARRSLRYGHPFEAITDAKLRRLRTLAVLWARHHGFFSSPIRIDAVAVLIPQGEEPRLEHLRGLG.

It belongs to the UPF0102 family.

The polypeptide is UPF0102 protein RSal33209_1090 (Renibacterium salmoninarum (strain ATCC 33209 / DSM 20767 / JCM 11484 / NBRC 15589 / NCIMB 2235)).